The sequence spans 501 residues: Glucose-6-phosphate exchanger SLC37A2 (501 aa).

A helical membrane pass occupies residues 19 to 39; sequence SWFRGFILLLTFLIYACYHMS. Residues Asn53, Asn62, and Asn68 are each glycosylated (N-linked (GlcNAc...) asparagine). Transmembrane regions (helical) follow at residues 88–108, 118–140, 142–164, 179–199, and 210–230; these read GAVD…SGIF, LSAG…FWNI, MLWY…WPSV, FIMG…SLIA, and SFIV…LFLI. Basic and acidic residues predominate over residues 240 to 252; sequence PPRHHDDPEKEQD. The disordered stretch occupies residues 240-266; that stretch reads PPRHHDDPEKEQDNPEDPVNSPYSSRE. 6 helical membrane-spanning segments follow: residues 303 to 323, 334 to 354, 362 to 382, 391 to 411, 434 to 454, and 462 to 482; these read CLLF…LYIF, GDLS…AGLI, ATTC…YNYI, IVML…ITTA, AIID…AGLI, and VFYM…RLVY.

It belongs to the major facilitator superfamily. Organophosphate:Pi antiporter (OPA) (TC 2.A.1.4) family. In terms of tissue distribution, highly expressed in bone marrow derived macrophages, and weakly in spleen.

The protein localises to the endoplasmic reticulum membrane. It carries out the reaction D-glucose 6-phosphate(in) + phosphate(out) = D-glucose 6-phosphate(out) + phosphate(in). Inhibited by vanadate but not by chlorogenic acid. Inorganic phosphate and glucose-6-phosphate antiporter. May transport cytoplasmic glucose-6-phosphate into the lumen of the endoplasmic reticulum and translocate inorganic phosphate into the opposite direction. Independent of a lumenal glucose-6-phosphatase. May not play a role in homeostatic regulation of blood glucose levels. This chain is Glucose-6-phosphate exchanger SLC37A2, found in Mus musculus (Mouse).